Consider the following 126-residue polypeptide: MYYFSRVAARTFCCCIFFCLATAYSRPDRNPRKIEKKDKKFFGASKNTNPANAMGNLFKAPTIEYVVEEVTRTHQPEQYDIPTDMSPLMTIAASESADKFTDKFFVDQSSIMKEKTSSKGNARTLL.

The protein resides in the mitochondrion. This chain is Protein FMP49, mitochondrial, found in Saccharomyces cerevisiae (strain ATCC 204508 / S288c) (Baker's yeast).